The chain runs to 169 residues: MRDAVTSLIKNYDVAGRYFDRNAIDTLKDYFDSGTARVQAAAAINSNAAALVKQAGSKLFEELPELIRPGGNAYTTRRLAACLRDMDYYLRYATYALVAGNTNVLDERVLQGLRETYNSLGVPIGPTVRGVQILKDLVKEQVAGAGIANTTFVEEPFDHITRELSERDV.

N72 is modified (N4-methylasparagine). C82 is a binding site for (2R,3E)-phycocyanobilin.

It belongs to the phycobiliprotein family. As to quaternary structure, heterodimer of ApcE and this beta chain. Contains one covalently linked bilin chromophore. The chromophore is added by phycocyanobilin lyase CpcS 1.

Its subcellular location is the cellular thylakoid membrane. In terms of biological role, a variant beta-allophycocyanin (AP) which forms a complex with ApcE, a phycobilisome terminal emitter that influences energy transfer to photosystem II. This Nostoc sp. (strain PCC 7120 / SAG 25.82 / UTEX 2576) protein is Allophycocyanin subunit beta-18 (apcF).